Here is an 87-residue protein sequence, read N- to C-terminus: Putative outer membrane protein ArbH (87 aa).

An N-terminal signal peptide occupies residues 1–23 (MKIKNSYLVIASLLYPISFISTA).

Belongs to the porin LamB (TC 1.B.3) family.

It is found in the cell outer membrane. Its function is as follows. May be a sugar porin with a broad carbohydrate specificity. The chain is Putative outer membrane protein ArbH (arbH) from Dickeya chrysanthemi (Pectobacterium chrysanthemi).